Consider the following 354-residue polypeptide: DNA repair protein rhp57 (354 aa).

100–107 (GESGSGKS) contributes to the ATP binding site.

This sequence belongs to the RecA family.

It localises to the nucleus. Involved in recombination DNA repair and in the repair of gamma-ray-induced damage. The sequence is that of DNA repair protein rhp57 (rhp57) from Schizosaccharomyces pombe (strain 972 / ATCC 24843) (Fission yeast).